Reading from the N-terminus, the 394-residue chain is NAD(P)H-quinone oxidoreductase subunit H (394 aa).

The protein belongs to the complex I 49 kDa subunit family. NDH-1 can be composed of about 15 different subunits; different subcomplexes with different compositions have been identified which probably have different functions.

It localises to the cellular thylakoid membrane. The catalysed reaction is a plastoquinone + NADH + (n+1) H(+)(in) = a plastoquinol + NAD(+) + n H(+)(out). It carries out the reaction a plastoquinone + NADPH + (n+1) H(+)(in) = a plastoquinol + NADP(+) + n H(+)(out). Its function is as follows. NDH-1 shuttles electrons from an unknown electron donor, via FMN and iron-sulfur (Fe-S) centers, to quinones in the respiratory and/or the photosynthetic chain. The immediate electron acceptor for the enzyme in this species is believed to be plastoquinone. Couples the redox reaction to proton translocation, and thus conserves the redox energy in a proton gradient. Cyanobacterial NDH-1 also plays a role in inorganic carbon-concentration. The protein is NAD(P)H-quinone oxidoreductase subunit H of Microcystis aeruginosa (strain NIES-843 / IAM M-2473).